Reading from the N-terminus, the 108-residue chain is Transcription initiation factor IIA subunit 2 (108 aa).

Belongs to the TFIIA subunit 2 family. As to quaternary structure, TFIIA is a heterodimer of the large unprocessed subunit 1 and a small subunit gamma. It was originally believed to be a heterotrimer of an alpha, a beta and a gamma subunit. Interacts with NCOA6 general coactivator. TFIIA forms a complex with TBP.

Its subcellular location is the nucleus. Functionally, TFIIA is a component of the transcription machinery of RNA polymerase II and plays an important role in transcriptional activation. TFIIA in a complex with TBP mediates transcriptional activity. This Oncorhynchus mykiss (Rainbow trout) protein is Transcription initiation factor IIA subunit 2 (gtf2a2).